Consider the following 397-residue polypeptide: Probable peptidoglycan glycosyltransferase FtsW (397 aa).

The Cytoplasmic portion of the chain corresponds to 1–18 (MSALTLTASKNTQTMTLD). The helical transmembrane segment at 19–39 (LPLLGSALALAAIGLIMVTSA) threads the bilayer. Residues 40–58 (SVDFADDANGQALYYMWRH) lie on the Periplasmic side of the membrane. Residues 59-79 (LTYLLAGVAVGFVILRLPLEW) form a helical membrane-spanning segment. The Cytoplasmic segment spans residues 80-83 (WHKQ). Residues 84–104 (SWLLLVVALGFLVAVLIPGIG) traverse the membrane as a helical segment. Topologically, residues 105–112 (RTVNGSTR) are periplasmic. Residues 113 to 133 (WISLGVINIQASEIAKVCLAI) traverse the membrane as a helical segment. The Cytoplasmic portion of the chain corresponds to 134–148 (YTASYLVRRLDEVRG). A helical transmembrane segment spans residues 149–169 (SWWGFAKPLLVLMLVALLLLM). At 170–172 (EPD) the chain is on the periplasmic side. A helical membrane pass occupies residues 173–193 (FGALVVTMCAVVGMIFLSGVA). The Cytoplasmic segment spans residues 194–196 (LSR). A helical membrane pass occupies residues 197 to 217 (FAALLMFCVGSVALLAVSQPY). Over 218–272 (RLKRLTAYTDPWADQFDSGYQLTQALIAFGRGEWSGVGLGNSVQKLFYLPEAHTD) the chain is Periplasmic. Residues 273 to 293 (FVFAIIAEELGLLGSLLIIVL) form a helical membrane-spanning segment. At 294 to 316 (FGVLLWRGMYVSRVAERAGQLFN) the chain is on the cytoplasmic side. A helical transmembrane segment spans residues 317-337 (AYAGYGVTLLLGGQALINLGV). The Periplasmic segment spans residues 338–348 (NTGLLPTKGLT). Residues 349 to 369 (LPLISYGGSSLIISCLCVAIL) form a helical membrane-spanning segment. At 370–397 (LRIGSEAVSGEQTEDESPKVKNRGGAQR) the chain is on the cytoplasmic side.

The protein belongs to the SEDS family. FtsW subfamily.

It localises to the cell inner membrane. It catalyses the reaction [GlcNAc-(1-&gt;4)-Mur2Ac(oyl-L-Ala-gamma-D-Glu-L-Lys-D-Ala-D-Ala)](n)-di-trans,octa-cis-undecaprenyl diphosphate + beta-D-GlcNAc-(1-&gt;4)-Mur2Ac(oyl-L-Ala-gamma-D-Glu-L-Lys-D-Ala-D-Ala)-di-trans,octa-cis-undecaprenyl diphosphate = [GlcNAc-(1-&gt;4)-Mur2Ac(oyl-L-Ala-gamma-D-Glu-L-Lys-D-Ala-D-Ala)](n+1)-di-trans,octa-cis-undecaprenyl diphosphate + di-trans,octa-cis-undecaprenyl diphosphate + H(+). Its pathway is cell wall biogenesis; peptidoglycan biosynthesis. Its function is as follows. Peptidoglycan polymerase that is essential for cell division. This chain is Probable peptidoglycan glycosyltransferase FtsW, found in Hahella chejuensis (strain KCTC 2396).